The sequence spans 172 residues: uncharacterized protein (172 aa).

Positions 10-122 (KESKVVKTSR…FLTFVALDSN (113 aa)) constitute a HotDog ACOT-type domain. The disordered stretch occupies residues 148-172 (RANERKNRKRHSQALANALGTDKPW).

This sequence belongs to the acyl coenzyme A hydrolase family.

This is an uncharacterized protein from Bacillus subtilis (strain 168).